The chain runs to 477 residues: Aryl-phospho-beta-D-glucosidase BglC (477 aa).

Glutamate 170 (proton donor) is an active-site residue. Catalysis depends on glutamate 378, which acts as the Nucleophile.

Belongs to the glycosyl hydrolase 1 family.

The enzyme catalyses 6-phospho-beta-D-glucosyl-(1-&gt;4)-D-glucose + H2O = D-glucose 6-phosphate + D-glucose. Its function is as follows. Is able to catalyze the hydrolysis of aryl-phospho-beta-D-glucosides such as 4-methylumbelliferyl-phospho-beta-D-glucopyranoside (MUG-P), phosphoarbutin and phosphosalicin. Is not essential for growth on arbutin and salicin as the sole carbon source. The polypeptide is Aryl-phospho-beta-D-glucosidase BglC (bglC) (Bacillus subtilis (strain 168)).